The following is a 186-amino-acid chain: Large ribosomal subunit protein bL9 (186 aa).

Residues 153–186 (ELRQVKSQSQKSQQQEAKQNEVGEATDSDKADQK) are disordered. Over residues 157 to 169 (VKSQSQKSQQQEA) the composition is skewed to low complexity.

Belongs to the bacterial ribosomal protein bL9 family.

In terms of biological role, binds to the 23S rRNA. The sequence is that of Large ribosomal subunit protein bL9 from Wolbachia sp. subsp. Brugia malayi (strain TRS).